A 471-amino-acid chain; its full sequence is UDP-N-acetylmuramoylalanine--D-glutamate ligase (471 aa).

122–128 (GSNAKST) contacts ATP.

This sequence belongs to the MurCDEF family.

It is found in the cytoplasm. The enzyme catalyses UDP-N-acetyl-alpha-D-muramoyl-L-alanine + D-glutamate + ATP = UDP-N-acetyl-alpha-D-muramoyl-L-alanyl-D-glutamate + ADP + phosphate + H(+). It functions in the pathway cell wall biogenesis; peptidoglycan biosynthesis. Functionally, cell wall formation. Catalyzes the addition of glutamate to the nucleotide precursor UDP-N-acetylmuramoyl-L-alanine (UMA). The sequence is that of UDP-N-acetylmuramoylalanine--D-glutamate ligase from Psychrobacter cryohalolentis (strain ATCC BAA-1226 / DSM 17306 / VKM B-2378 / K5).